A 160-amino-acid chain; its full sequence is Large ribosomal subunit protein uL15 (160 aa).

Residues 1–13 are compositionally biased toward basic and acidic residues; that stretch reads MKLNELRDNEGAA. Residues 1–51 are disordered; it reads MKLNELRDNEGAARKKKRVARGPGSGKGKTAGRGIKGQKSRSGVALNGYEG. The segment covering 23–35 has biased composition (gly residues); it reads PGSGKGKTAGRGI.

Belongs to the universal ribosomal protein uL15 family. As to quaternary structure, part of the 50S ribosomal subunit.

In terms of biological role, binds to the 23S rRNA. The protein is Large ribosomal subunit protein uL15 of Cereibacter sphaeroides (strain ATCC 17025 / ATH 2.4.3) (Rhodobacter sphaeroides).